We begin with the raw amino-acid sequence, 435 residues long: Methylenetetrahydrofolate--tRNA-(uracil-5-)-methyltransferase TrmFO (435 aa).

9–14 (GAGLAG) contacts FAD.

The protein belongs to the MnmG family. TrmFO subfamily. FAD serves as cofactor.

It is found in the cytoplasm. It carries out the reaction uridine(54) in tRNA + (6R)-5,10-methylene-5,6,7,8-tetrahydrofolate + NADH + H(+) = 5-methyluridine(54) in tRNA + (6S)-5,6,7,8-tetrahydrofolate + NAD(+). The enzyme catalyses uridine(54) in tRNA + (6R)-5,10-methylene-5,6,7,8-tetrahydrofolate + NADPH + H(+) = 5-methyluridine(54) in tRNA + (6S)-5,6,7,8-tetrahydrofolate + NADP(+). Its function is as follows. Catalyzes the folate-dependent formation of 5-methyl-uridine at position 54 (M-5-U54) in all tRNAs. The polypeptide is Methylenetetrahydrofolate--tRNA-(uracil-5-)-methyltransferase TrmFO (Enterococcus faecalis (strain ATCC 700802 / V583)).